We begin with the raw amino-acid sequence, 109 residues long: MGSLIIEDLQESFGKEAVKGKEITVHYTGWLEDGTKFDSSLDRRQPLTITLGVGQVIKGWDEGFGGMKEGGKRKLTIPSEMGYGAHGAGGVIPPHATLIFEVELLKVYE.

Positions 20–108 (GKEITVHYTG…IFEVELLKVY (89 aa)) constitute a PPIase FKBP-type domain.

The protein belongs to the FKBP-type PPIase family.

It carries out the reaction [protein]-peptidylproline (omega=180) = [protein]-peptidylproline (omega=0). Functionally, PPIases accelerate the folding of proteins. This chain is FK506-binding protein (fbp), found in Neisseria meningitidis serogroup C.